We begin with the raw amino-acid sequence, 384 residues long: Ribosomal RNA small subunit methyltransferase H (384 aa).

S-adenosyl-L-methionine contacts are provided by residues 99–101 (GGH), aspartate 118, tyrosine 145, aspartate 169, and glutamine 176.

It belongs to the methyltransferase superfamily. RsmH family.

Its subcellular location is the cytoplasm. It catalyses the reaction cytidine(1402) in 16S rRNA + S-adenosyl-L-methionine = N(4)-methylcytidine(1402) in 16S rRNA + S-adenosyl-L-homocysteine + H(+). Functionally, specifically methylates the N4 position of cytidine in position 1402 (C1402) of 16S rRNA. The chain is Ribosomal RNA small subunit methyltransferase H from Mycobacteroides abscessus (strain ATCC 19977 / DSM 44196 / CCUG 20993 / CIP 104536 / JCM 13569 / NCTC 13031 / TMC 1543 / L948) (Mycobacterium abscessus).